An 816-amino-acid polypeptide reads, in one-letter code: tRNA(Met) cytidine acetyltransferase TmcA (816 aa).

ATP is bound by residues Gln-265 and Arg-439. In terms of domain architecture, N-acetyltransferase spans Glu-469 to Ser-664. Residues Ile-589–Thr-591, Glu-629, and Arg-636 contribute to the acetyl-CoA site.

The protein belongs to the TmcA family.

Its subcellular location is the cytoplasm. It catalyses the reaction cytidine(34) in elongator tRNA(Met) + acetyl-CoA + ATP + H2O = N(4)-acetylcytidine(34) in elongator tRNA(Met) + ADP + phosphate + CoA + H(+). The enzyme catalyses a cytidine in RNA + acetyl-CoA + ATP + H2O = an N(4)-acetylcytidine in RNA + ADP + phosphate + CoA + H(+). The catalysed reaction is a cytidine in tRNA + acetyl-CoA + ATP + H2O = an N(4)-acetylcytidine in tRNA + ADP + phosphate + CoA + H(+). It carries out the reaction a cytidine in mRNA + acetyl-CoA + ATP + H2O = an N(4)-acetylcytidine in mRNA + ADP + phosphate + CoA + H(+). Catalyzes the formation of N(4)-acetylcytidine (ac(4)C) at the wobble position of tRNA(Met), by using acetyl-CoA as an acetyl donor and ATP (or GTP). In terms of biological role, catalyzes the formation of 233 N(4)-acetylcytidine (ac(4)C) sites in RNA, on the middle C of a CCG motif. Modifications are found in rRNA, ncRNA, mRNA and tRNA. More acetylation is observed at 85 than at 65 or 75 degrees Celsius. The polypeptide is tRNA(Met) cytidine acetyltransferase TmcA (Pyrococcus furiosus (strain ATCC 43587 / DSM 3638 / JCM 8422 / Vc1)).